Reading from the N-terminus, the 151-residue chain is Cell division control protein 2 homolog 2 (151 aa).

The Protein kinase domain occupies Ala-1 to Leu-151. Lys-3 provides a ligand contact to ATP. The Proton acceptor role is filled by Asp-113.

This sequence belongs to the protein kinase superfamily. CMGC Ser/Thr protein kinase family. CDC2/CDKX subfamily.

The enzyme catalyses L-seryl-[protein] + ATP = O-phospho-L-seryl-[protein] + ADP + H(+). It carries out the reaction L-threonyl-[protein] + ATP = O-phospho-L-threonyl-[protein] + ADP + H(+). The catalysed reaction is [DNA-directed RNA polymerase] + ATP = phospho-[DNA-directed RNA polymerase] + ADP + H(+). In Pisum sativum (Garden pea), this protein is Cell division control protein 2 homolog 2.